The chain runs to 266 residues: MAAASSTTATTAILAAVIISLAGAATTVDAKFRAMQWTPAHATFYGDETASETMGGACGYGNLYASGYGTDTAALSTTLFKDGYGCGTCYQMRCVGTASCYRGSPAITVTATNLCPPNWAEDPDRGGGGWCNPPRAHFDLSKPAFMRMADWRAGIVPVMYRRVPCARAGGLRFALQGNPYWLLAYVMNVAGAGDVGDMWVKAGGGGGWVRMSHNWGASYQAFAQLGGQALSFKVTSYTTGQTILAAGVTPASWCFGLTYQARVNFS.

A signal peptide spans 1-24 (MAAASSTTATTAILAAVIISLAGA). The Expansin-like EG45 domain maps to 55 to 170 (GGACGYGNLY…RRVPCARAGG (116 aa)). An Expansin-like CBD domain is found at 180 to 261 (YWLLAYVMNV…SWCFGLTYQA (82 aa)).

The protein belongs to the expansin family. Expansin A subfamily.

It localises to the secreted. It is found in the cell wall. Its subcellular location is the membrane. Functionally, may cause loosening and extension of plant cell walls by disrupting non-covalent bonding between cellulose microfibrils and matrix glucans. No enzymatic activity has been found. May be required for rapid internodal elongation in deepwater rice during submergence. The polypeptide is Putative expansin-A30 (EXPA30) (Oryza sativa subsp. japonica (Rice)).